A 521-amino-acid polypeptide reads, in one-letter code: Bifunctional purine biosynthesis protein PurH (521 aa).

The region spanning 1–147 (MAKITRALIS…KNNADVTVVV (147 aa)) is the MGS-like domain.

Belongs to the PurH family.

The enzyme catalyses (6R)-10-formyltetrahydrofolate + 5-amino-1-(5-phospho-beta-D-ribosyl)imidazole-4-carboxamide = 5-formamido-1-(5-phospho-D-ribosyl)imidazole-4-carboxamide + (6S)-5,6,7,8-tetrahydrofolate. It catalyses the reaction IMP + H2O = 5-formamido-1-(5-phospho-D-ribosyl)imidazole-4-carboxamide. It participates in purine metabolism; IMP biosynthesis via de novo pathway; 5-formamido-1-(5-phospho-D-ribosyl)imidazole-4-carboxamide from 5-amino-1-(5-phospho-D-ribosyl)imidazole-4-carboxamide (10-formyl THF route): step 1/1. The protein operates within purine metabolism; IMP biosynthesis via de novo pathway; IMP from 5-formamido-1-(5-phospho-D-ribosyl)imidazole-4-carboxamide: step 1/1. The polypeptide is Bifunctional purine biosynthesis protein PurH (Geotalea uraniireducens (strain Rf4) (Geobacter uraniireducens)).